We begin with the raw amino-acid sequence, 145 residues long: Large ribosomal subunit protein uL16 (145 aa).

Basic residues predominate over residues 1 to 17 (MLMPKRVKHRKVQRGRM). A disordered region spans residues 1 to 20 (MLMPKRVKHRKVQRGRMKGV).

This sequence belongs to the universal ribosomal protein uL16 family. As to quaternary structure, part of the 50S ribosomal subunit.

Functionally, binds 23S rRNA and is also seen to make contacts with the A and possibly P site tRNAs. This is Large ribosomal subunit protein uL16 from Acetivibrio thermocellus (strain ATCC 27405 / DSM 1237 / JCM 9322 / NBRC 103400 / NCIMB 10682 / NRRL B-4536 / VPI 7372) (Clostridium thermocellum).